Consider the following 389-residue polypeptide: Probable DNA double-strand break repair nuclease NurA (389 aa).

D74 and D151 together coordinate Mn(2+).

This sequence belongs to the NurA family. Requires Mn(2+) as cofactor.

Functionally, involved in DNA double-strand break (DSB) repair. Probably acts with HerA to stimulate resection of the 5' strand and produce the long 3' single-strand that is required for RadA loading. In Methanocaldococcus jannaschii (strain ATCC 43067 / DSM 2661 / JAL-1 / JCM 10045 / NBRC 100440) (Methanococcus jannaschii), this protein is Probable DNA double-strand break repair nuclease NurA.